The following is a 587-amino-acid chain: Hatching enzyme (587 aa).

A signal peptide spans 1–18 (MANSGLILLVMFMIHVTT). Positions 19–166 (VHNVPLPSTA…PRCGVPDVLP (148 aa)) are cleaved as a propeptide — activation peptide. 3 N-linked (GlcNAc...) asparagine glycosylation sites follow: N64, N126, and N141. Positions 157–164 (PRCGVPDV) match the Cysteine switch motif. The Zn(2+) site is built by C159 and H283. E284 is a catalytic residue. Zn(2+) is bound by residues H287 and H293. Residues 325–382 (LYGSNSGSGTTTTTRRPTTTRATTTRRTTTTRATTTRATTTTTTSPSRPSPPRRACSG) form a disordered region. The segment covering 334–371 (TTTTTRRPTTTRATTTRRTTTTRATTTRATTTTTTSPS) has biased composition (low complexity). C380 and C582 are oxidised to a cystine. 4 Hemopexin repeats span residues 381–422 (SGSF…RFGF), 425–468 (PQNI…WVGL), 469–513 (PCNI…FNDV), and 518–570 (HDGV…IPQC). N584 carries N-linked (GlcNAc...) asparagine glycosylation.

Belongs to the peptidase M10A family. The cofactor is Zn(2+).

The catalysed reaction is Hydrolysis of proteins of the fertilization envelope and dimethylcasein.. Its function is as follows. Allows the sea urchin to digest the protective envelope derived from the egg extracellular matrix; thus allowing the sea urchin to swim freely. The protein is Hatching enzyme of Paracentrotus lividus (Common sea urchin).